We begin with the raw amino-acid sequence, 187 residues long: GTP cyclohydrolase 1 (187 aa).

Zn(2+) contacts are provided by Cys-79, His-82, and Cys-150.

Belongs to the GTP cyclohydrolase I family. As to quaternary structure, toroid-shaped homodecamer, composed of two pentamers of five dimers.

It carries out the reaction GTP + H2O = 7,8-dihydroneopterin 3'-triphosphate + formate + H(+). The protein operates within cofactor biosynthesis; 7,8-dihydroneopterin triphosphate biosynthesis; 7,8-dihydroneopterin triphosphate from GTP: step 1/1. This chain is GTP cyclohydrolase 1, found in Fusobacterium nucleatum subsp. nucleatum (strain ATCC 25586 / DSM 15643 / BCRC 10681 / CIP 101130 / JCM 8532 / KCTC 2640 / LMG 13131 / VPI 4355).